The chain runs to 67 residues: Large ribosomal subunit protein bL35 (67 aa).

The protein belongs to the bacterial ribosomal protein bL35 family.

This chain is Large ribosomal subunit protein bL35, found in Sphingopyxis alaskensis (strain DSM 13593 / LMG 18877 / RB2256) (Sphingomonas alaskensis).